The sequence spans 218 residues: Zinc finger CCHC-type and RNA-binding motif-containing protein 1 (218 aa).

In terms of domain architecture, RRM spans 10 to 88 (STVYVSNLPF…RAIKASIAKD (79 aa)). The CCHC-type zinc finger occupies 105-122 (SRCYECGDTGHLSYACPK). Residues 119–218 (ACPKNMLGER…YFSDEDELSD (100 aa)) are disordered. Positions 132–188 (QKKEKKKRKRLVEEEEEEVVEEEESEDEGEDPALDSLSQAIAFQQARIDEEKNKYRH) form a coiled coil. Acidic residues predominate over residues 144–164 (EEEEEEVVEEEESEDEGEDPA). A compositionally biased stretch (basic and acidic residues) spans 178–201 (RIDEEKNKYRHDPAEASTSEDSRR).

As to quaternary structure, component of the U11/U12 snRNPs that are part of the U12-type spliceosome.

It localises to the nucleus. This is Zinc finger CCHC-type and RNA-binding motif-containing protein 1 (zcrb1) from Xenopus laevis (African clawed frog).